Consider the following 59-residue polypeptide: Dybowskin-1CDYa (59 aa).

Residues 1 to 22 (MFTLKKSLLLLFFLGTINFSLC) form the signal peptide. Residues 23–44 (EEERNAEEERRDYPEERDVEVE) constitute a propeptide that is removed on maturation.

The protein belongs to the frog skin active peptide (FSAP) family. Brevinin subfamily. Expressed by the skin glands.

It is found in the secreted. In terms of biological role, antimicrobial peptide. Has activity against the Gram-positive bacterium S.aureus (MIC=6 uM) and the Gram-negative bacterium E.coli (MIC=3 uM). Lacks hemolytic activity against human erythrocytes. This is Dybowskin-1CDYa from Rana dybowskii (Dybovsky's frog).